The sequence spans 20 residues: Magnificalysin I (20 aa).

Residues 1–10 (ALAGTIIAGA) are plays an important role in the hemolytic activity. Residues 9-20 (GASLTFKILDEV) are N-terminal region.

This sequence belongs to the actinoporin family. Sea anemone subfamily. In terms of assembly, octamer or nonamer in membranes. Monomer in the soluble state.

It localises to the secreted. Its subcellular location is the nematocyst. The protein resides in the target cell membrane. Pore-forming protein that forms cations-selective hydrophilic pores of around 1 nm and causes cytolysis. Pore formation is a multi-step process that involves specific recognition of membrane sphingomyelin (but neither cholesterol nor phosphatidylcholine) using aromatic rich region and adjacent phosphocholine (POC) binding site, firm binding to the membrane (mainly driven by hydrophobic interactions) accompanied by the transfer of the N-terminal region to the lipid-water interface and finally pore formation after oligomerization of monomers. The chain is Magnificalysin I from Heteractis magnifica (Magnificent sea anemone).